A 362-amino-acid polypeptide reads, in one-letter code: dTDP-glucose 4,6-dehydratase (362 aa).

Residues 11–12, 32–35, 58–59, 80–84, and threonine 99 each bind NAD(+); these read FI, DKLT, DI, and LAAES. Serine 84 is a binding site for substrate. Threonine 133 contributes to the substrate binding site. Aspartate 134 functions as the Proton donor in the catalytic mechanism. Residues glutamate 135 and tyrosine 167 each act as proton acceptor in the active site. 167–171 lines the NAD(+) pocket; the sequence is YSASK. Substrate is bound at residue asparagine 196. An NAD(+)-binding site is contributed by asparagine 197. Substrate contacts are provided by residues 206-207, 222-224, arginine 231, asparagine 266, and 300-304; these read KL, PVY, and DRPGH.

The protein belongs to the NAD(P)-dependent epimerase/dehydratase family. dTDP-glucose dehydratase subfamily. NAD(+) is required as a cofactor.

The enzyme catalyses dTDP-alpha-D-glucose = dTDP-4-dehydro-6-deoxy-alpha-D-glucose + H2O. It functions in the pathway bacterial outer membrane biogenesis; LPS O-antigen biosynthesis. Its function is as follows. Catalyzes the dehydration of dTDP-D-glucose to form dTDP-4-dehydro-6-deoxy-D-glucose via a three-step process involving oxidation, dehydration and reduction. This reaction is a step in the biosynthesis of D-fucofuranose, a component of E.coli O52 O antigen. The chain is dTDP-glucose 4,6-dehydratase (rmlB) from Escherichia coli.